The following is a 181-amino-acid chain: MSNTTLHATTIYAVRHNGKAAMAGDGQVTLGQQVIMKQTARKVRRLYEGKVLAGFAGSVADAFTLFEKFETKLQQFSGNLERAAVELAQEWRGDKQLRQLEAMLIVMDKDAILVVSGTGEVIAPDDDLIAIGSGGNYALSAGRALKHHASHLSAEEMAYESLKVAADICVFTNDNIVVETL.

The active site involves Thr-9. Na(+) is bound by residues Ala-166, Cys-169, and Thr-172.

Belongs to the peptidase T1B family. HslV subfamily. As to quaternary structure, a double ring-shaped homohexamer of HslV is capped on each side by a ring-shaped HslU homohexamer. The assembly of the HslU/HslV complex is dependent on binding of ATP.

The protein resides in the cytoplasm. The enzyme catalyses ATP-dependent cleavage of peptide bonds with broad specificity.. Its activity is regulated as follows. Allosterically activated by HslU binding. Its function is as follows. Protease subunit of a proteasome-like degradation complex believed to be a general protein degrading machinery. This chain is ATP-dependent protease subunit HslV, found in Staphylococcus aureus (strain bovine RF122 / ET3-1).